Consider the following 455-residue polypeptide: MDTNNNIEKEILALVKQKVSPIEYENYFSQLKYNPNASKSDIAFFYAPNMLLCNWITAKHGALLKEILSQNKVGMHLAHSVDVRIEVAPKIQINAQANINYKAIKTSVKDSYTFENFVVGSCNNTVYEIAKKVAQSDTPPYNPVLFYGGTGLGKTHILNAIGNHALEKHKKVVLVTSEDFLTDFLKHLDNKTMDSFKKKYRHCDFFLLDDAQFLQGKPKLEEEFFHTFNELHANSKQIVLISDRSPKNIAGLEDRLKSRFEWGITAKVMPPDLETKLSIVKQKCQLNKITLPEEVMEYIAQHISDNIRQMEGAIIKISVNANLMNAPIDLNLAKTVLEDLQKDHAEGSSLENILLAVAQSLNLKSSEIKVSSRQKNVALARKLVVYFARLYTPNPTLSLAQFLDLKDHSSISKMYSSVKKMLEEEKNPFVLSLREEIKNRLNELNDKKTAFNSSE.

The tract at residues 1-75 (MDTNNNIEKE…EILSQNKVGM (75 aa)) is domain I, interacts with DnaA modulators. The tract at residues 75 to 106 (MHLAHSVDVRIEVAPKIQINAQANINYKAIKT) is domain II. The domain III, AAA+ region stretch occupies residues 107 to 321 (SVKDSYTFEN…GAIIKISVNA (215 aa)). The ATP site is built by G151, G153, K154, and T155. The interval 322-455 (NLMNAPIDLN…DKKTAFNSSE (134 aa)) is domain IV, binds dsDNA.

It belongs to the DnaA family. In terms of assembly, oligomerizes as a right-handed, spiral filament on DNA at oriC.

Its subcellular location is the cytoplasm. Functionally, plays an essential role in the initiation and regulation of chromosomal replication. ATP-DnaA binds to the origin of replication (oriC) to initiate formation of the DNA replication initiation complex once per cell cycle. Binds the DnaA box (a 9 base pair repeat at the origin) and separates the double-stranded (ds)DNA. Forms a right-handed helical filament on oriC DNA; dsDNA binds to the exterior of the filament while single-stranded (ss)DNA is stabiized in the filament's interior. The ATP-DnaA-oriC complex binds and stabilizes one strand of the AT-rich DNA unwinding element (DUE), permitting loading of DNA polymerase. After initiation quickly degrades to an ADP-DnaA complex that is not apt for DNA replication. Binds acidic phospholipids. The protein is Chromosomal replication initiator protein DnaA of Helicobacter pylori (strain G27).